The following is a 232-amino-acid chain: Ovalbumin-related protein X (232 aa).

Belongs to the serpin family. Ov-serpin subfamily. As to expression, expressed in egg white (at protein level).

In Gallus gallus (Chicken), this protein is Ovalbumin-related protein X (SERPINB14C).